Reading from the N-terminus, the 263-residue chain is 3-methyl-2-oxobutanoate hydroxymethyltransferase (263 aa).

Mg(2+)-binding residues include Asp45 and Asp84. 3-methyl-2-oxobutanoate-binding positions include 45 to 46 (DS), Asp84, and Lys112. Glu114 is a binding site for Mg(2+). Glu180 functions as the Proton acceptor in the catalytic mechanism.

Belongs to the PanB family. In terms of assembly, homodecamer; pentamer of dimers. Requires Mg(2+) as cofactor.

The protein resides in the cytoplasm. It catalyses the reaction 3-methyl-2-oxobutanoate + (6R)-5,10-methylene-5,6,7,8-tetrahydrofolate + H2O = 2-dehydropantoate + (6S)-5,6,7,8-tetrahydrofolate. It functions in the pathway cofactor biosynthesis; (R)-pantothenate biosynthesis; (R)-pantoate from 3-methyl-2-oxobutanoate: step 1/2. Its function is as follows. Catalyzes the reversible reaction in which hydroxymethyl group from 5,10-methylenetetrahydrofolate is transferred onto alpha-ketoisovalerate to form ketopantoate. The sequence is that of 3-methyl-2-oxobutanoate hydroxymethyltransferase from Salmonella arizonae (strain ATCC BAA-731 / CDC346-86 / RSK2980).